Consider the following 349-residue polypeptide: N-formyl peptide receptor 3 (349 aa).

The Extracellular portion of the chain corresponds to 1-27 (METNFSIPLNETEEVLPEPAGHTVLWI). N4 and N10 each carry an N-linked (GlcNAc...) asparagine glycan. The chain crosses the membrane as a helical span at residues 28–50 (FSLLVHGVTFIFGVLGNGLVIWV). Topologically, residues 51–61 (AGFLMTRTVNT) are cytoplasmic. A helical transmembrane segment spans residues 62 to 83 (ICYLNLALADFSFSAILPFHMV). The Extracellular segment spans residues 84–100 (SVAMREKWPFGSFLCKL). C98 and C176 are disulfide-bonded. Residues 101–121 (VHVMIDINLFVSVYLITIIAL) traverse the membrane as a helical segment. At 122–140 (DRCICVLHPAWAQNHRTMS) the chain is on the cytoplasmic side. Residues 141–162 (LAKRVMTGLWILTIVLTLPNFI) traverse the membrane as a helical segment. Topologically, residues 163 to 205 (FWTTISTTNGDTYCIFNFPFWGDTAVERLNVFITMAKVFLILH) are extracellular. The helical transmembrane segment at 206–226 (FIIGFSMPMSIITVCYGIIAA) threads the bilayer. At 227 to 242 (KIHRNHMIKSSRPLRV) the chain is on the cytoplasmic side. Residues 243–266 (FAAVVASFFICWFPYELIGILMAV) form a helical membrane-spanning segment. Topologically, residues 267-286 (WLKEMLLNGKYKIILVLINP) are extracellular. A helical transmembrane segment spans residues 287–306 (TSSLAFFNSCLNPILYVFLG). Over 307 to 349 (SNFQERLIRSLPTSLERALTEVPDSAQTSNTHTTSASPPEETE) the chain is Cytoplasmic. A disordered region spans residues 327–349 (EVPDSAQTSNTHTTSASPPEETE). The segment covering 331–343 (SAQTSNTHTTSAS) has biased composition (polar residues).

This sequence belongs to the G-protein coupled receptor 1 family.

It localises to the cell membrane. In terms of biological role, low affinity receptor for N-formyl-methionyl peptides, which are powerful neutrophils chemotactic factors. Binding of FMLP to the receptor causes activation of neutrophils. This response is mediated via a G-protein that activates a phosphatidylinositol-calcium second messenger system. This chain is N-formyl peptide receptor 3 (FPR3), found in Gorilla gorilla gorilla (Western lowland gorilla).